The sequence spans 165 residues: RNA pyrophosphohydrolase (165 aa).

A Nudix hydrolase domain is found at 13–154; the sequence is PYRQGVGIML…KRPVYEQVVA (142 aa). Residues 46-67 carry the Nudix box motif; sequence GGIDAGEDPETAAWREMEEEIG.

The protein belongs to the Nudix hydrolase family. RppH subfamily. A divalent metal cation is required as a cofactor.

Its function is as follows. Accelerates the degradation of transcripts by removing pyrophosphate from the 5'-end of triphosphorylated RNA, leading to a more labile monophosphorylated state that can stimulate subsequent ribonuclease cleavage. This is RNA pyrophosphohydrolase from Rhodospirillum rubrum (strain ATCC 11170 / ATH 1.1.1 / DSM 467 / LMG 4362 / NCIMB 8255 / S1).